Here is a 33-residue protein sequence, read N- to C-terminus: Gastrin (33 aa).

The tract at residues 1–21 (ELEPQGPPHLGTDLSKKQGPW) is disordered. Gln-18 bears the Pyrrolidone carboxylic acid mark. The residue at position 28 (Tyr-28) is a Sulfotyrosine. Phe-33 carries the post-translational modification Phenylalanine amide.

This sequence belongs to the gastrin/cholecystokinin family.

Its subcellular location is the secreted. In terms of biological role, gastrin stimulates the stomach mucosa to produce and secrete hydrochloric acid and the pancreas to secrete its digestive enzymes. It also stimulates smooth muscle contraction and increases blood circulation and water secretion in the stomach and intestine. This chain is Gastrin (GAST), found in Chinchilla chinchilla (Short-tailed chinchilla).